The chain runs to 107 residues: Large ribosomal subunit protein P1 (107 aa).

Residues 67–82 (PTATSAAAAPAAGEAS) are compositionally biased toward low complexity. The tract at residues 67 to 107 (PTATSAAAAPAAGEASGKAEEKKKEEPEEEGDDDMGFGLFD) is disordered. Residues 83-92 (GKAEEKKKEE) are compositionally biased toward basic and acidic residues.

The protein belongs to the eukaryotic ribosomal protein P1/P2 family. P1 and P2 exist as dimers at the large ribosomal subunit.

In terms of biological role, plays an important role in the elongation step of protein synthesis. This chain is Large ribosomal subunit protein P1, found in Leishmania peruviana.